Consider the following 1430-residue polypeptide: Death-associated protein kinase 1 (1430 aa).

Residues 13–275 (YDTGEELGSG…IQDSLQHPWI (263 aa)) enclose the Protein kinase domain. ATP is bound by residues 19–27 (LGSGQFAVV), lysine 42, 94–96 (ELV), and glutamate 100. Aspartate 139 (proton acceptor) is an active-site residue. Aspartate 161 contacts ATP. The segment at 267-334 (QDSLQHPWIK…RSNMSVARSD (68 aa)) is calmodulin-binding. Serine 289 carries the post-translational modification Phosphoserine; by RPS6KA1 and RPS6KA3. The segment at 292–301 (NMEKFKKFAA) is autoinhibitory domain. Serine 308 is modified (phosphoserine; by autocatalysis). Phosphoserine is present on residues serine 319 and serine 333. ANK repeat units lie at residues 378–407 (HGTP…RIDV), 411–440 (GGSN…PLDV), 444–473 (SGEM…NPNI), 477–506 (EEET…NVNI), 510–539 (EGET…DLNA), 543–572 (DGHI…FVDY), 576–605 (HGNT…NLDI), and 609–638 (YGRT…SVEA). Residues 681–955 (TQNLQPRIKL…NHLQEIRSQI (275 aa)) enclose the Roc domain. Position 734 is a phosphoserine; by MAPK1 (serine 734). An ANK 9 repeat occupies 875-904 (KLKNPLQVVLVATHADIMNVPRPAGGEFGY). Position 1115 is a phosphoserine (serine 1115). One copy of the ANK 10 repeat lies at 1162-1196 (EGDADIRLWVNGCKLANRGAELLVLLVNHGQGIEV). The region spanning 1312–1396 (KLSRLLDPPD…DAADFLLKAS (85 aa)) is the Death domain.

It belongs to the protein kinase superfamily. CAMK Ser/Thr protein kinase family. DAP kinase subfamily. As to quaternary structure, interacts with KLHL20. Interacts (via death domain) with MAPK1 and MAPK3. Interacts with MAP1B (via N-terminus). Interacts with PRKD1 in an oxidative stress-regulated manner. Interacts with PIN1, PDCD6, BECN1, TSC2 and STX1A. Interacts (via kinase domain) with DAPK3 (via kinase domain). Interacts with GRINB. Interacts (via death domain) with UNC5B (via death domain). Interacts with UNC5C (via death domain). Mg(2+) serves as cofactor. Ubiquitinated by the BCR(KLHL20) E3 ubiquitin ligase complex, leading to its degradation by the proteasome. Post-translationally, removal of the C-terminal tail of isoform 2 (corresponding to amino acids 296-337 of isoform 2) by proteolytic cleavage stimulates maximally its membrane-blebbing function. In terms of processing, in response to mitogenic stimulation (PMA or EGF), phosphorylated at Ser-289; phosphorylation suppresses DAPK1 pro-apoptotic function. Autophosphorylation at Ser-308 inhibits its catalytic activity. Phosphorylation at Ser-734 by MAPK1 increases its catalytic activity and promotes cytoplasmic retention of MAPK1. Endoplasmic-stress can cause dephosphorylation at Ser-308. Isoform 2 is expressed in normal intestinal tissue as well as in colorectal carcinomas.

It localises to the cytoplasm. Its subcellular location is the cytoskeleton. The enzyme catalyses L-seryl-[protein] + ATP = O-phospho-L-seryl-[protein] + ADP + H(+). It catalyses the reaction L-threonyl-[protein] + ATP = O-phospho-L-threonyl-[protein] + ADP + H(+). Its activity is regulated as follows. Activated by Ca(2+)/calmodulin. Regulated by a locking mechanism, involving autophosphorylation at Ser-308 and calmodulin binding. In the inactive state, Ser-308 is phosphorylated. Activation involves its dephosphorylation and a release-of-autoinhibition mechanism where binding of calmodulin induces a conformational change that relieves the steric block of the active site by the autoinhibitory domain. Activity is modulated by UNC5B and NTN1. UNC5B activates it by inhibiting the phosphorylation at Ser-308, whereas NTN1 inhibits UNC5B-mediated activation of DAPK1. Endoplasmic-stress activates by causing Ser-308 dephosphorylation. Functionally, calcium/calmodulin-dependent serine/threonine kinase involved in multiple cellular signaling pathways that trigger cell survival, apoptosis, and autophagy. Regulates both type I apoptotic and type II autophagic cell deaths signal, depending on the cellular setting. The former is caspase-dependent, while the latter is caspase-independent and is characterized by the accumulation of autophagic vesicles. Phosphorylates PIN1 resulting in inhibition of its catalytic activity, nuclear localization, and cellular function. Phosphorylates TPM1, enhancing stress fiber formation in endothelial cells. Phosphorylates STX1A and significantly decreases its binding to STXBP1. Phosphorylates PRKD1 and regulates JNK signaling by binding and activating PRKD1 under oxidative stress. Phosphorylates BECN1, reducing its interaction with BCL2 and BCL2L1 and promoting the induction of autophagy. Phosphorylates TSC2, disrupting the TSC1-TSC2 complex and stimulating mTORC1 activity in a growth factor-dependent pathway. Phosphorylates RPS6, MYL9 and DAPK3. Acts as a signaling amplifier of NMDA receptors at extrasynaptic sites for mediating brain damage in stroke. Cerebral ischemia recruits DAPK1 into the NMDA receptor complex and it phosphorylates GRINB at Ser-1303 inducing injurious Ca(2+) influx through NMDA receptor channels, resulting in an irreversible neuronal death. Required together with DAPK3 for phosphorylation of RPL13A upon interferon-gamma activation which is causing RPL13A involvement in transcript-selective translation inhibition. Its function is as follows. Isoform 2 cannot induce apoptosis but can induce membrane blebbing. The chain is Death-associated protein kinase 1 (DAPK1) from Homo sapiens (Human).